We begin with the raw amino-acid sequence, 300 residues long: Epimerase family protein MW0731 (300 aa).

This sequence belongs to the NAD(P)-dependent epimerase/dehydratase family. SDR39U1 subfamily.

This is Epimerase family protein MW0731 from Staphylococcus aureus (strain MW2).